We begin with the raw amino-acid sequence, 352 residues long: Quinolinate synthase (352 aa).

Iminosuccinate contacts are provided by H48 and S69. Residue C114 participates in [4Fe-4S] cluster binding. Residues 140–142 (YAN) and S157 each bind iminosuccinate. C201 is a [4Fe-4S] cluster binding site. Iminosuccinate is bound by residues 227–229 (HPE) and T244. C298 serves as a coordination point for [4Fe-4S] cluster.

This sequence belongs to the quinolinate synthase family. Type 1 subfamily. Requires [4Fe-4S] cluster as cofactor.

The protein localises to the cytoplasm. The enzyme catalyses iminosuccinate + dihydroxyacetone phosphate = quinolinate + phosphate + 2 H2O + H(+). It functions in the pathway cofactor biosynthesis; NAD(+) biosynthesis; quinolinate from iminoaspartate: step 1/1. Catalyzes the condensation of iminoaspartate with dihydroxyacetone phosphate to form quinolinate. In Pseudomonas fluorescens (strain Pf0-1), this protein is Quinolinate synthase.